The sequence spans 1859 residues: DNA-directed RNA polymerase subunit beta'' (1859 aa).

4 residues coordinate Zn(2+): C286, C359, C366, and C369.

It belongs to the RNA polymerase beta' chain family. RpoC2 subfamily. As to quaternary structure, in plastids the minimal PEP RNA polymerase catalytic core is composed of four subunits: alpha, beta, beta', and beta''. When a (nuclear-encoded) sigma factor is associated with the core the holoenzyme is formed, which can initiate transcription. Requires Zn(2+) as cofactor.

The protein localises to the plastid. It is found in the chloroplast. The catalysed reaction is RNA(n) + a ribonucleoside 5'-triphosphate = RNA(n+1) + diphosphate. Its function is as follows. DNA-dependent RNA polymerase catalyzes the transcription of DNA into RNA using the four ribonucleoside triphosphates as substrates. The polypeptide is DNA-directed RNA polymerase subunit beta'' (Oltmannsiellopsis viridis (Marine flagellate)).